Reading from the N-terminus, the 312-residue chain is 4-hydroxy-3-methylbut-2-enyl diphosphate reductase (312 aa).

C15 contacts [4Fe-4S] cluster. Residues H44 and H77 each contribute to the (2E)-4-hydroxy-3-methylbut-2-enyl diphosphate site. Positions 44 and 77 each coordinate dimethylallyl diphosphate. The isopentenyl diphosphate site is built by H44 and H77. C99 is a binding site for [4Fe-4S] cluster. H127 contacts (2E)-4-hydroxy-3-methylbut-2-enyl diphosphate. H127 contributes to the dimethylallyl diphosphate binding site. H127 is an isopentenyl diphosphate binding site. The Proton donor role is filled by E129. Residue T167 participates in (2E)-4-hydroxy-3-methylbut-2-enyl diphosphate binding. C197 contacts [4Fe-4S] cluster. 4 residues coordinate (2E)-4-hydroxy-3-methylbut-2-enyl diphosphate: S225, S226, N227, and S269. 4 residues coordinate dimethylallyl diphosphate: S225, S226, N227, and S269. S225, S226, N227, and S269 together coordinate isopentenyl diphosphate.

Belongs to the IspH family. The cofactor is [4Fe-4S] cluster.

It catalyses the reaction isopentenyl diphosphate + 2 oxidized [2Fe-2S]-[ferredoxin] + H2O = (2E)-4-hydroxy-3-methylbut-2-enyl diphosphate + 2 reduced [2Fe-2S]-[ferredoxin] + 2 H(+). The catalysed reaction is dimethylallyl diphosphate + 2 oxidized [2Fe-2S]-[ferredoxin] + H2O = (2E)-4-hydroxy-3-methylbut-2-enyl diphosphate + 2 reduced [2Fe-2S]-[ferredoxin] + 2 H(+). Its pathway is isoprenoid biosynthesis; dimethylallyl diphosphate biosynthesis; dimethylallyl diphosphate from (2E)-4-hydroxy-3-methylbutenyl diphosphate: step 1/1. It functions in the pathway isoprenoid biosynthesis; isopentenyl diphosphate biosynthesis via DXP pathway; isopentenyl diphosphate from 1-deoxy-D-xylulose 5-phosphate: step 6/6. Functionally, catalyzes the conversion of 1-hydroxy-2-methyl-2-(E)-butenyl 4-diphosphate (HMBPP) into a mixture of isopentenyl diphosphate (IPP) and dimethylallyl diphosphate (DMAPP). Acts in the terminal step of the DOXP/MEP pathway for isoprenoid precursor biosynthesis. The chain is 4-hydroxy-3-methylbut-2-enyl diphosphate reductase from Aromatoleum aromaticum (strain DSM 19018 / LMG 30748 / EbN1) (Azoarcus sp. (strain EbN1)).